The following is a 260-amino-acid chain: tRNA pseudouridine synthase A (260 aa).

Asp-51 serves as the catalytic Nucleophile. Residue Tyr-109 participates in substrate binding.

Belongs to the tRNA pseudouridine synthase TruA family. Homodimer.

It catalyses the reaction uridine(38/39/40) in tRNA = pseudouridine(38/39/40) in tRNA. Formation of pseudouridine at positions 38, 39 and 40 in the anticodon stem and loop of transfer RNAs. In Albidiferax ferrireducens (strain ATCC BAA-621 / DSM 15236 / T118) (Rhodoferax ferrireducens), this protein is tRNA pseudouridine synthase A.